The following is a 448-amino-acid chain: UDP-N-acetylmuramate--L-alanine ligase (448 aa).

118–124 (GTHGKTT) contributes to the ATP binding site.

This sequence belongs to the MurCDEF family.

The protein localises to the cytoplasm. It catalyses the reaction UDP-N-acetyl-alpha-D-muramate + L-alanine + ATP = UDP-N-acetyl-alpha-D-muramoyl-L-alanine + ADP + phosphate + H(+). The protein operates within cell wall biogenesis; peptidoglycan biosynthesis. Its function is as follows. Cell wall formation. This is UDP-N-acetylmuramate--L-alanine ligase from Flavobacterium psychrophilum (strain ATCC 49511 / DSM 21280 / CIP 103535 / JIP02/86).